Reading from the N-terminus, the 164-residue chain is Phosphopantetheine adenylyltransferase (164 aa).

Residue serine 9 participates in substrate binding. Residues 9 to 10 (SF) and histidine 17 each bind ATP. 3 residues coordinate substrate: lysine 41, leucine 73, and lysine 87. Residues 88–90 (GLR), glutamate 98, and 123–129 (YSYISSS) contribute to the ATP site.

It belongs to the bacterial CoaD family. In terms of assembly, homohexamer. Mg(2+) is required as a cofactor.

It localises to the cytoplasm. The enzyme catalyses (R)-4'-phosphopantetheine + ATP + H(+) = 3'-dephospho-CoA + diphosphate. Its pathway is cofactor biosynthesis; coenzyme A biosynthesis; CoA from (R)-pantothenate: step 4/5. Its function is as follows. Reversibly transfers an adenylyl group from ATP to 4'-phosphopantetheine, yielding dephospho-CoA (dPCoA) and pyrophosphate. This Clostridium perfringens (strain 13 / Type A) protein is Phosphopantetheine adenylyltransferase.